Consider the following 317-residue polypeptide: Glycine--tRNA ligase alpha subunit (317 aa).

It belongs to the class-II aminoacyl-tRNA synthetase family. As to quaternary structure, tetramer of two alpha and two beta subunits.

It is found in the cytoplasm. It catalyses the reaction tRNA(Gly) + glycine + ATP = glycyl-tRNA(Gly) + AMP + diphosphate. The protein is Glycine--tRNA ligase alpha subunit of Pseudomonas fluorescens (strain SBW25).